Reading from the N-terminus, the 829-residue chain is ATP-dependent RNA helicase drs1 (829 aa).

Disordered regions lie at residues 1 to 96 (MAPS…MDTE) and 145 to 295 (RRER…MSSF). Over residues 20–32 (DNEEDIPLEEEQE) the composition is skewed to acidic residues. Positions 48–59 (KQKKKNNKKSKK) are enriched in basic residues. Positions 63–78 (TEDDDDEAETKEDDAA) are enriched in acidic residues. The segment covering 150–163 (AAKEGKTTATKEEE) has biased composition (basic and acidic residues). Acidic residues-rich tracts occupy residues 164–190 (DKMEVDEEEDDIEEIDVDLDDDEDGVL), 218–228 (DGEDEDSEGED), 235–246 (DEDEGDASDDDS), and 258–271 (QSSDDEEGIDEEEE). Over residues 272 to 291 (AKMKEFFAPEEENQPKKKGE) the composition is skewed to basic and acidic residues. Positions 293-321 (SSFQEMSLSRPILRGLTSVGFTKPTPIQA) match the Q motif motif. Residues 324 to 498 (IPISLMGKDV…RAGLNKPVRI (175 aa)) form the Helicase ATP-binding domain. 337–344 (AVTGSGKT) serves as a coordination point for ATP. The DEAD box signature appears at 446–449 (DEAD). The region spanning 528–707 (YLLHICKTIY…EKQLQNMEMQ (180 aa)) is the Helicase C-terminal domain. The segment at 728–829 (TWFETQEDKK…KGGKGKGRRK (102 aa)) is disordered. Basic and acidic residues predominate over residues 749–791 (GVRDKLKSKNEGKLSNKDRKKLDTMQERKQERTYKKGSAERAG). Residues 800-815 (KVVKKVGRSAGPKKKG) show a composition bias toward basic residues.

Belongs to the DEAD box helicase family. DDX27/DRS1 subfamily. Associates with pre-ribosomal particles.

The protein resides in the nucleus. It localises to the nucleolus. It catalyses the reaction ATP + H2O = ADP + phosphate + H(+). In terms of biological role, ATP-binding RNA helicase involved in ribosome assembly. This Neurospora crassa (strain ATCC 24698 / 74-OR23-1A / CBS 708.71 / DSM 1257 / FGSC 987) protein is ATP-dependent RNA helicase drs1 (drh-11).